The chain runs to 773 residues: DNA gyrase subunit B (773 aa).

The Toprim domain occupies 416–530 (SEIFLVEGDS…QGHVFIAQAP (115 aa)). Mg(2+) contacts are provided by Glu-422, Asp-495, and Asp-497.

The protein belongs to the type II topoisomerase GyrB family. Heterotetramer, composed of two GyrA and two GyrB chains. In the heterotetramer, GyrA contains the active site tyrosine that forms a transient covalent intermediate with DNA, while GyrB binds cofactors and catalyzes ATP hydrolysis. Mg(2+) is required as a cofactor. Mn(2+) serves as cofactor. The cofactor is Ca(2+).

The protein resides in the cytoplasm. It catalyses the reaction ATP-dependent breakage, passage and rejoining of double-stranded DNA.. Its function is as follows. A type II topoisomerase that negatively supercoils closed circular double-stranded (ds) DNA in an ATP-dependent manner to modulate DNA topology and maintain chromosomes in an underwound state. Negative supercoiling favors strand separation, and DNA replication, transcription, recombination and repair, all of which involve strand separation. Also able to catalyze the interconversion of other topological isomers of dsDNA rings, including catenanes and knotted rings. Type II topoisomerases break and join 2 DNA strands simultaneously in an ATP-dependent manner. This Helicobacter pylori (strain J99 / ATCC 700824) (Campylobacter pylori J99) protein is DNA gyrase subunit B.